A 455-amino-acid chain; its full sequence is MALWGGRFQGETSALFKLFNDSLPVDYRLFEQDVVGSIAWADAIASVGIITATECSDLKKALNELLVEVKGDPAIILASGAEDIHSFVESALIAKVGDLGKKLHTGRSRNDQVATDLKLWCQSEGAALVARLQTLRSELIALAEREFDAVMPGYTHLQRAQPVTFGHWCLAYVEMIERDLSRLTDALKRANTCPLGSGALAGTAYQMDRHALAAALNFASPTLNSLDSVSDRDHVVELCSTASISMIHLSRMAEDLIFFNSGEAGFISLSDEVTSGSSLMPQKKNPDALELIRGKTGRVYGSLVGILTTMKALPLAYNKDMQEDKEGLFDVVDSWAICLDMAALVLSGLVVNRPNALLAAQQGYANATELADYLVSKGMPFREAHHVVGVAVVAAIAKKIPLEGFTLAEFKTFADIIEDDVYPNLTIEACLAKRDVLGGTALTQVKQAISAKKIV.

The protein belongs to the lyase 1 family. Argininosuccinate lyase subfamily.

Its subcellular location is the cytoplasm. The catalysed reaction is 2-(N(omega)-L-arginino)succinate = fumarate + L-arginine. The protein operates within amino-acid biosynthesis; L-arginine biosynthesis; L-arginine from L-ornithine and carbamoyl phosphate: step 3/3. In Shewanella sp. (strain ANA-3), this protein is Argininosuccinate lyase.